The chain runs to 124 residues: Large ribosomal subunit protein bL12 (124 aa).

This sequence belongs to the bacterial ribosomal protein bL12 family. As to quaternary structure, homodimer. Part of the ribosomal stalk of the 50S ribosomal subunit. Forms a multimeric L10(L12)X complex, where L10 forms an elongated spine to which 2 to 4 L12 dimers bind in a sequential fashion. Binds GTP-bound translation factors.

Functionally, forms part of the ribosomal stalk which helps the ribosome interact with GTP-bound translation factors. Is thus essential for accurate translation. The chain is Large ribosomal subunit protein bL12 from Pelodictyon phaeoclathratiforme (strain DSM 5477 / BU-1).